A 1244-amino-acid polypeptide reads, in one-letter code: Membrane-associated phosphatidylinositol transfer protein 1 (1244 aa).

Threonine 59 is subject to Phosphothreonine. Disordered stretches follow at residues 258 to 331 (KCNT…QSLS) and 339 to 358 (ARDS…EGFS). Threonine 287 carries the post-translational modification Phosphothreonine; by CDK1. The segment covering 299 to 319 (ASPDASFGKQWSSSSRSSYSS) has biased composition (low complexity). Phosphoserine occurs at positions 300, 304, 319, 326, 329, 342, 345, 346, and 373. Serine 382 is modified (phosphoserine; by CDK1). The tract at residues 581-682 (AGTGSRGSSR…SSEAPDGPSS (102 aa)) is disordered. Phosphoserine occurs at positions 593, 600, and 621. Residues 643 to 658 (GSQNSLQAAPATTSSW) are compositionally biased toward polar residues. One can recognise a DDHD domain in the interval 686 to 880 (LDFKVSGFFL…VAFILRQVIE (195 aa)). Serine 896 bears the Phosphoserine mark. Positions 1206-1244 (QLLRSRGPSQAEREGPGTPPTTLARGKARSISLKLDSEE) are disordered. Arginine 1211 and arginine 1218 each carry omega-N-methylarginine. A Phosphoserine modification is found at serine 1237.

The protein belongs to the PtdIns transfer protein family. PI transfer class IIA subfamily. In terms of assembly, interacts with PIK4CA. Interacts with PTK2B via its C-terminus. Interacts with RHOA. Has higher affinity for the inactive, GDP-bound form of RHOA. The CDK1-phosphorylated form interacts with PLK1. Interacts with VAPB. In terms of processing, phosphorylated on multiple sites by CDK1 at the onset of mitosis. Phosphorylation facilitates dissociation from the Golgi complex and is required for interaction with PLK1. Phosphorylated on threonine residues upon treatment with oleic acid. Post-translationally, phosphorylated on tyrosine residues by PTK2B. Ubiquitous.

The protein localises to the cytoplasm. The protein resides in the golgi apparatus. It localises to the golgi stack membrane. It is found in the endoplasmic reticulum membrane. Its subcellular location is the lipid droplet. The protein localises to the cleavage furrow. The protein resides in the midbody. It catalyses the reaction a 1,2-diacyl-sn-glycero-3-phospho-(1D-myo-inositol)(in) = a 1,2-diacyl-sn-glycero-3-phospho-(1D-myo-inositol)(out). Its function is as follows. Catalyzes the transfer of phosphatidylinositol (PI) between membranes. Binds PI, phosphatidylcholine (PC) and phosphatidic acid (PA) with the binding affinity order of PI &gt; PA &gt; PC. Regulates RHOA activity, and plays a role in cytoskeleton remodeling. Necessary for normal completion of cytokinesis. Plays a role in maintaining normal diacylglycerol levels in the Golgi apparatus. Necessary for maintaining the normal structure of the endoplasmic reticulum and the Golgi apparatus. Required for protein export from the endoplasmic reticulum and the Golgi. Binds calcium ions. The sequence is that of Membrane-associated phosphatidylinositol transfer protein 1 (PITPNM1) from Homo sapiens (Human).